Reading from the N-terminus, the 833-residue chain is Glycerol-3-phosphate acyltransferase (833 aa).

The HXXXXD motif signature appears at 310 to 315; the sequence is HRSHID.

This sequence belongs to the GPAT/DAPAT family.

Its subcellular location is the cell inner membrane. It catalyses the reaction sn-glycerol 3-phosphate + an acyl-CoA = a 1-acyl-sn-glycero-3-phosphate + CoA. It functions in the pathway phospholipid metabolism; CDP-diacylglycerol biosynthesis; CDP-diacylglycerol from sn-glycerol 3-phosphate: step 1/3. The polypeptide is Glycerol-3-phosphate acyltransferase (Pseudomonas syringae pv. tomato (strain ATCC BAA-871 / DC3000)).